The primary structure comprises 205 residues: High frequency lysogenization protein HflD homolog (205 aa).

The protein belongs to the HflD family.

Its subcellular location is the cytoplasm. It is found in the cell inner membrane. This chain is High frequency lysogenization protein HflD homolog, found in Vibrio atlanticus (strain LGP32) (Vibrio splendidus (strain Mel32)).